A 348-amino-acid chain; its full sequence is Aspartate carbamoyltransferase catalytic subunit (348 aa).

Residues arginine 59 and threonine 60 each coordinate carbamoyl phosphate. Residue lysine 87 coordinates L-aspartate. Residues arginine 109, histidine 142, and glutamine 145 each contribute to the carbamoyl phosphate site. Residues arginine 182 and arginine 253 each coordinate L-aspartate. Residues glycine 294 and proline 295 each contribute to the carbamoyl phosphate site.

Belongs to the aspartate/ornithine carbamoyltransferase superfamily. ATCase family. In terms of assembly, heterododecamer (2C3:3R2) of six catalytic PyrB chains organized as two trimers (C3), and six regulatory PyrI chains organized as three dimers (R2).

The catalysed reaction is carbamoyl phosphate + L-aspartate = N-carbamoyl-L-aspartate + phosphate + H(+). The protein operates within pyrimidine metabolism; UMP biosynthesis via de novo pathway; (S)-dihydroorotate from bicarbonate: step 2/3. Catalyzes the condensation of carbamoyl phosphate and aspartate to form carbamoyl aspartate and inorganic phosphate, the committed step in the de novo pyrimidine nucleotide biosynthesis pathway. The polypeptide is Aspartate carbamoyltransferase catalytic subunit (Prochlorococcus marinus (strain MIT 9303)).